The primary structure comprises 87 residues: uncharacterized protein (87 aa).

2 helical membrane-spanning segments follow: residues 8 to 28 and 47 to 67; these read IVVLIGTQLAASAVILFIFDL and LAGSFAFYLFSAGLFFLLIGL.

The protein localises to the cell membrane. This is an uncharacterized protein from Bacillus subtilis (strain 168).